Consider the following 1048-residue polypeptide: Self-sufficient cytochrome P450 monooxygenase CYP505E4 (1048 aa).

Cys-405 contacts heme. Residues 499–640 enclose the Flavodoxin-like domain; it reads VSFFYGSNSG…DLEVWEETNL (142 aa). Residues 505–509 and 584–616 each bind FMN; these read SNSGT and VFGC…TRLA. An FAD-binding FR-type domain is found at 678 to 906; that stretch reads RDLIEAKVTA…RPAKDAFHLP (229 aa).

In the N-terminal section; belongs to the cytochrome P450 family. It depends on FAD as a cofactor. FMN is required as a cofactor. The cofactor is heme.

It catalyses the reaction 2 oxidized [cytochrome P450] + NADPH = 2 reduced [cytochrome P450] + NADP(+) + H(+). It carries out the reaction an organic molecule + reduced [NADPH--hemoprotein reductase] + O2 = an alcohol + oxidized [NADPH--hemoprotein reductase] + H2O + H(+). The catalysed reaction is dodecanoate + reduced [NADPH--hemoprotein reductase] + O2 = 5-hydroxydodecanoate + oxidized [NADPH--hemoprotein reductase] + H2O + H(+). The enzyme catalyses tetradecanoate + reduced [NADPH--hemoprotein reductase] + O2 = 7-hydroxytetradecanoate + oxidized [NADPH--hemoprotein reductase] + H2O + H(+). It catalyses the reaction dodecan-1-ol + reduced [NADPH--hemoprotein reductase] + O2 = 1,5-dodecanediol + oxidized [NADPH--hemoprotein reductase] + H2O + H(+). It carries out the reaction dodecan-1-ol + reduced [NADPH--hemoprotein reductase] + O2 = 1,4-dodecanediol + oxidized [NADPH--hemoprotein reductase] + H2O + H(+). The catalysed reaction is dodecan-1-ol + reduced [NADPH--hemoprotein reductase] + O2 = 1,6-dodecanediol + oxidized [NADPH--hemoprotein reductase] + H2O + H(+). Functionally, self-sufficient cytochrome P450 monooxygenase that catalyzes the regioselective in-chain hydroxylation of alkanes, fatty alcohols, and fatty acids at the omega-7 position. Performs hydroxylation of C10-C16 n-alkanes and C12 and C14 fatty alcohols; and thereby enables the one step biocatalytic synthesis of rare alcohols such as 5-dodecanol and 7-tetradecanol. Converts 1-dodecanol into 1,5-dodecanediol as major product with very little sub-terminally hydroxylated products with the 1,4-dodecanediol and 1,6-dodecanediol more abundant. Converts dodecanoic acid to 5-hydroxydodecanoic acid which can be further converted into delta-dodecalactone by lactonization of the 5-hydroxy acid at low pH. Also gives sub-terminal hydroxylation of dodecanoic acid with 9-hydroxydodecanoic acid being the second most abundant product. The sequence is that of Self-sufficient cytochrome P450 monooxygenase CYP505E4 from Penicillium expansum (Blue mold rot fungus).